A 161-amino-acid chain; its full sequence is EKWELDLDIEEVFIHPNYTKSTTDNDIALLRLAQPATLSQTIVPICLPDSGLAERELTQAGQETLVTGWGYHSSREKEAKRNRTFILNFIKIPVVPRNECSEVMSNMVSENMLCAGILGDRQDACEGDSGGPMVASFHGTWFLVGLVSWGEGCGLLHNYGV.

Positions 1-161 constitute a Peptidase S1 domain; that stretch reads EKWELDLDIE…GCGLLHNYGV (161 aa). A glycan (N-linked (GlcNAc...) asparagine) is linked at Asn-17. Catalysis depends on Asp-26, which acts as the Charge relay system. Asn-82 carries an N-linked (GlcNAc...) asparagine glycan. 2 disulfides stabilise this stretch: Cys-100/Cys-114 and Cys-125/Cys-153. The active-site Charge relay system is Ser-129.

This sequence belongs to the peptidase S1 family. As to expression, plasma; synthesized in the liver.

It is found in the secreted. It localises to the golgi apparatus. The protein localises to the endoplasmic reticulum. The enzyme catalyses Degradation of blood coagulation factors Va and VIIIa.. Its function is as follows. Protein C is a vitamin K-dependent serine protease that regulates blood coagulation by inactivating factors Va and VIIIa in the presence of calcium ions and phospholipids. Exerts a protective effect on the endothelial cell barrier function. In Macaca mulatta (Rhesus macaque), this protein is Vitamin K-dependent protein C (PROC).